Here is a 317-residue protein sequence, read N- to C-terminus: Acetyl-coenzyme A carboxylase carboxyl transferase subunit alpha (317 aa).

The CoA carboxyltransferase C-terminal domain occupies 41–291 (KVDKLLRSTY…SMALDSALRD (251 aa)).

Belongs to the AccA family. Acetyl-CoA carboxylase is a heterohexamer composed of biotin carboxyl carrier protein (AccB), biotin carboxylase (AccC) and two subunits each of ACCase subunit alpha (AccA) and ACCase subunit beta (AccD).

It is found in the cytoplasm. It carries out the reaction N(6)-carboxybiotinyl-L-lysyl-[protein] + acetyl-CoA = N(6)-biotinyl-L-lysyl-[protein] + malonyl-CoA. Its pathway is lipid metabolism; malonyl-CoA biosynthesis; malonyl-CoA from acetyl-CoA: step 1/1. In terms of biological role, component of the acetyl coenzyme A carboxylase (ACC) complex. First, biotin carboxylase catalyzes the carboxylation of biotin on its carrier protein (BCCP) and then the CO(2) group is transferred by the carboxyltransferase to acetyl-CoA to form malonyl-CoA. The protein is Acetyl-coenzyme A carboxylase carboxyl transferase subunit alpha of Paramagnetospirillum magneticum (strain ATCC 700264 / AMB-1) (Magnetospirillum magneticum).